A 481-amino-acid polypeptide reads, in one-letter code: MVRFQRRKLLASCLCVTATVFLMVTLQVVVELGKFERKKLKDSNVQDGHRDVEGEPKHLEPFPEKEALALAGRTKVDAGSYPIVLWWSPLTGETGRLGQCGADACFFTINRTFQHHPMTRAFLFYGTDFNIDSLPLPREAHHDWALFHEESPKNNYKLFHKPVITLFNHTATFSRHSHLPLTTQYLEGVDVLKSLRYLVPLQAKNNLRQKLAPLVYVQSDCDPPSDRDSYVRELMAYIEVDSYGECLQNRDLPQQLKNPASMDADAFYRVIAQYKFILAFENAVCDDYITEKFWRPLKLGVVPVYYGSPTIADWLPSNRSAILVSEFSHPRELASFIRRLDYDDGLYETYVEWKLKGKISNQRLLTALNEREWGVQDINQDNYIDSFECMVCRRVWANSRLQEQGLPPKQWKADVSHLHCPEPALFTFSSPASPALRGRSLRELWLPSFQQSKKEAQALRWLVDRNQNFSSEEFWALVFKD.

Over 1–8 (MVRFQRRK) the chain is Cytoplasmic. Residues 9–31 (LLASCLCVTATVFLMVTLQVVVE) form a helical; Signal-anchor for type II membrane protein membrane-spanning segment. Topologically, residues 32–481 (LGKFERKKLK…EEFWALVFKD (450 aa)) are lumenal. Residues asparagine 110, asparagine 168, and asparagine 318 are each glycosylated (N-linked (GlcNAc...) asparagine). Cysteine 389 and cysteine 392 are disulfide-bonded. A glycan (N-linked (GlcNAc...) asparagine) is linked at asparagine 468.

This sequence belongs to the glycosyltransferase 10 family. In terms of tissue distribution, widely expressed, with a higher expression in liver and thymus.

It is found in the endoplasmic reticulum membrane. It carries out the reaction L-threonyl-[protein] + GDP-beta-L-fucose = 3-O-(alpha-L-fucosyl)-L-threonyl-[protein] + GDP + H(+). It catalyses the reaction L-seryl-[protein] + GDP-beta-L-fucose = 3-O-(alpha-L-fucosyl)-L-seryl-[protein] + GDP + H(+). It functions in the pathway protein modification; protein glycosylation. Protein O-fucosyltransferase that specifically catalyzes O-fucosylation of serine or threonine residues in EMI domains of target proteins, such as MMRN1, MMRN2 and EMID1. Attaches fucose through an O-glycosidic linkage. O-fucosylation of EMI domain-containing proteins may be required for facilitating protein folding and secretion. May also show alpha-(1,3)-fucosyltransferase activity toward the innermost N-acetyl glucosamine (GlcNAc) residue in biantennary N-glycan acceptors. However, this was tested with a library of synthetic substrates and this activity is unsure in vivo. May be involved in biosynthesis of Lewis X-carrying biantennary N-glycans that regulate neuron stem cell self-renewal during brain development. This Mus musculus (Mouse) protein is GDP-fucose protein O-fucosyltransferase 3.